The primary structure comprises 906 residues: MISTLLTKIIGSRNDRTLKALRKIVKQINAMEPQFEALSDSELQAKTAEYRQRLEQGETLDQLLPEAFATVREASKRVFGMRHFDVQLIGSMVLDSNRIAEMKTGEGKTLTATLPAYLNALSGRGVHVVTVNDYLAKRDAEANRPLFTFLGMTVDCNVPGMDASQKRDAYAADITYGTNNEFGFDYLRDNMAFSPEQRVQRPLNYALVDEVDSVLIDEARTPLIISGPAEDSSALYIQVNKLIPQLIKQDKEDTEEYTGEGHYTVDEKNRQALLTENGQIFVEELLKREDLLAEEDSLFSATNISLLHHVNAGLRAHTLFERNVDYIVQKDEIVIVDEHTGRTMPGRRWSDGLHQAVEAKEGVKIQNENQTLASITFQNYFRLYDKLAGMTGTADTEAFEFQQIYGLDTVVIPTNKPMVRKDMGDLVYLTAQEKYAAIVEDIRGCVSRGQPVLVGTVSIENSELLSGILTKENIPHKVLNAKFHAMEAEIVAQAGQLGAVTIATNMAGRGTDIVLGGNWQAEIAQLDNPTDEQIAELKAAWQVRHDEVLAAGGLHIIGTERHESRRIDNQLRGRSGRQGDPGSSRFYLSMEDTLMRIFASDRVTGMMKKLGMEEGEAIEHPWVTKAIENAQRKVEGRNFDIRKSLLEFDDVANDQRKVVYEQRNELLDTNDISETIHVIRDDVYGAVIDEYIPPQSLEEMWDVPGLEARLKADFGLDLPLQQWLAEDDKLYEEKLRERILDEATKLYAHKQELVGVEVLRNFEKAVMLQTLDGLWKEHLAAMDHLRQGIHLRGYAQKNPKQEYKRESFDLFTQMLETLKRDVVSILSRVQVQERDVEALEEQQRQQSEAAPRTYTHATAESQLADEEAAGEEGHTTFVRDEQKIGRNDPCPCGSGKKYKHCHGQLT.

ATP contacts are provided by residues glutamine 87, 105–109 (GEGKT), and aspartate 512. A disordered region spans residues 839 to 896 (LEEQQRQQSEAAPRTYTHATAESQLADEEAAGEEGHTTFVRDEQKIGRNDPCPCGSGK). The segment covering 871 to 886 (EEGHTTFVRDEQKIGR) has biased composition (basic and acidic residues). Residues cysteine 890, cysteine 892, cysteine 901, and histidine 902 each coordinate Zn(2+).

Belongs to the SecA family. In terms of assembly, monomer and homodimer. Part of the essential Sec protein translocation apparatus which comprises SecA, SecYEG and auxiliary proteins SecDF-YajC and YidC. Requires Zn(2+) as cofactor.

Its subcellular location is the cell inner membrane. The protein localises to the cytoplasm. The catalysed reaction is ATP + H2O + cellular proteinSide 1 = ADP + phosphate + cellular proteinSide 2.. Part of the Sec protein translocase complex. Interacts with the SecYEG preprotein conducting channel. Has a central role in coupling the hydrolysis of ATP to the transfer of proteins into and across the cell membrane, serving both as a receptor for the preprotein-SecB complex and as an ATP-driven molecular motor driving the stepwise translocation of polypeptide chains across the membrane. This Aeromonas salmonicida (strain A449) protein is Protein translocase subunit SecA.